Reading from the N-terminus, the 256-residue chain is DNA repair protein RecO (256 aa).

This sequence belongs to the RecO family.

Functionally, involved in DNA repair and RecF pathway recombination. The protein is DNA repair protein RecO of Pelotomaculum thermopropionicum (strain DSM 13744 / JCM 10971 / SI).